Here is a 537-residue protein sequence, read N- to C-terminus: 2-succinyl-5-enolpyruvyl-6-hydroxy-3-cyclohexene-1-carboxylate synthase (537 aa).

Belongs to the TPP enzyme family. MenD subfamily. Homodimer. Requires Mg(2+) as cofactor. Mn(2+) serves as cofactor. The cofactor is thiamine diphosphate.

It carries out the reaction isochorismate + 2-oxoglutarate + H(+) = 5-enolpyruvoyl-6-hydroxy-2-succinyl-cyclohex-3-ene-1-carboxylate + CO2. Its pathway is quinol/quinone metabolism; 1,4-dihydroxy-2-naphthoate biosynthesis; 1,4-dihydroxy-2-naphthoate from chorismate: step 2/7. It participates in quinol/quinone metabolism; menaquinone biosynthesis. In terms of biological role, catalyzes the thiamine diphosphate-dependent decarboxylation of 2-oxoglutarate and the subsequent addition of the resulting succinic semialdehyde-thiamine pyrophosphate anion to isochorismate to yield 2-succinyl-5-enolpyruvyl-6-hydroxy-3-cyclohexene-1-carboxylate (SEPHCHC). This Rhodococcus erythropolis (strain PR4 / NBRC 100887) protein is 2-succinyl-5-enolpyruvyl-6-hydroxy-3-cyclohexene-1-carboxylate synthase.